A 386-amino-acid chain; its full sequence is Protein RecA (386 aa).

Residue 76–83 (GPESSGKT) coordinates ATP. A disordered region spans residues 362–386 (FDDEDDDFDASTAPAGTFTEVTTEN).

This sequence belongs to the RecA family.

Its subcellular location is the cytoplasm. In terms of biological role, can catalyze the hydrolysis of ATP in the presence of single-stranded DNA, the ATP-dependent uptake of single-stranded DNA by duplex DNA, and the ATP-dependent hybridization of homologous single-stranded DNAs. It interacts with LexA causing its activation and leading to its autocatalytic cleavage. The polypeptide is Protein RecA (Corynebacterium efficiens (strain DSM 44549 / YS-314 / AJ 12310 / JCM 11189 / NBRC 100395)).